The sequence spans 372 residues: MKYDLIIIGSGSVGAAAGYYATRAGLNVLMTDAHMPPHQHGSHHGDTRLIRHAYGEGEKYVPLVLRAQMLWDELSRHNEDDPIFVRSGVINLGPADSAFLANVAHSAEQWQLNVEKLDAQGIMARWPEIRVPDNYIGLFETDSGFLRSELAIKTWIQLAKEAGCAQLFNCPVTAIRHDDDGVTIETADGEYQAKKAIVCAGTWVKDLLPELPVQPVRKVFAWYQADGRYSVKNKFPAFTGELPNGDQYYGFPAENDALKIGKHNGGQVIHSADERVPFAEVVSDGSEAFPFLRNVLPGIGCCLYGAACTYDNSPDEDFIIDTLPGHDNTLLITGLSGHGFKFASVLGEIAADFAQDKKSDFDLTPFRLSRFQ.

Aspartate 4–histidine 34 provides a ligand contact to FAD. At cysteine 308 the chain carries S-8alpha-FAD cysteine.

Belongs to the MSOX/MTOX family. MTOX subfamily. Monomer. FAD is required as a cofactor.

It carries out the reaction N(alpha)-methyl-L-tryptophan + O2 + H2O = L-tryptophan + formaldehyde + H2O2. Catalyzes the oxidative demethylation of N-methyl-L-tryptophan. The sequence is that of N-methyl-L-tryptophan oxidase from Escherichia coli O1:K1 / APEC.